Consider the following 417-residue polypeptide: Histidine--tRNA ligase (417 aa).

Belongs to the class-II aminoacyl-tRNA synthetase family. Homodimer.

Its subcellular location is the cytoplasm. The catalysed reaction is tRNA(His) + L-histidine + ATP = L-histidyl-tRNA(His) + AMP + diphosphate + H(+). The polypeptide is Histidine--tRNA ligase (Caldanaerobacter subterraneus subsp. tengcongensis (strain DSM 15242 / JCM 11007 / NBRC 100824 / MB4) (Thermoanaerobacter tengcongensis)).